A 78-amino-acid chain; its full sequence is Acyl carrier protein (78 aa).

A Carrier domain is found at 2-77 (SSIEERVKKI…LAINYINENL (76 aa)). S37 carries the O-(pantetheine 4'-phosphoryl)serine modification.

The protein belongs to the acyl carrier protein (ACP) family. Post-translationally, 4'-phosphopantetheine is transferred from CoA to a specific serine of apo-ACP by AcpS. This modification is essential for activity because fatty acids are bound in thioester linkage to the sulfhydryl of the prosthetic group.

It localises to the cytoplasm. The protein operates within lipid metabolism; fatty acid biosynthesis. Functionally, carrier of the growing fatty acid chain in fatty acid biosynthesis. This chain is Acyl carrier protein, found in Saccharophagus degradans (strain 2-40 / ATCC 43961 / DSM 17024).